Here is a 415-residue protein sequence, read N- to C-terminus: Phosphoribosylamine--glycine ligase (415 aa).

In terms of domain architecture, ATP-grasp spans 108-311 (KKIMEKYNIP…LMQHIIDLDE (204 aa)). 134–191 (IENCELPVVVKKDGLAAGKGVIIADTIEAARSAIEIMYGDEEEGTVVFETFLEGEEFS) lines the ATP pocket. The Mg(2+) site is built by Glu281 and Asn283.

Belongs to the GARS family. Mg(2+) is required as a cofactor. The cofactor is Mn(2+).

It carries out the reaction 5-phospho-beta-D-ribosylamine + glycine + ATP = N(1)-(5-phospho-beta-D-ribosyl)glycinamide + ADP + phosphate + H(+). It participates in purine metabolism; IMP biosynthesis via de novo pathway; N(1)-(5-phospho-D-ribosyl)glycinamide from 5-phospho-alpha-D-ribose 1-diphosphate: step 2/2. The protein is Phosphoribosylamine--glycine ligase of Staphylococcus aureus (strain COL).